The primary structure comprises 336 residues: Structure-specific endonuclease subunit SLX1 (336 aa).

The 84-residue stretch at 21–104 folds into the GIY-YIG domain; sequence SFYGVYLLQS…QHCHETRHIK (84 aa). The interval 37–57 is disordered; that stretch reads FYIGSTPDPPRRLRQHNGDLK. An SLX1-type zinc finger spans residues 214–290; it reads CALCLEPIEQ…PATVNRCCSC (77 aa).

It belongs to the SLX1 family. Forms a heterodimer with SLX4. The cofactor is a divalent metal cation.

It is found in the nucleus. Its function is as follows. Catalytic subunit of the SLX1-SLX4 structure-specific endonuclease that resolves DNA secondary structures generated during DNA repair and recombination. Has endonuclease activity towards branched DNA substrates, introducing single-strand cuts in duplex DNA close to junctions with ss-DNA. This is Structure-specific endonuclease subunit SLX1 from Scheffersomyces stipitis (strain ATCC 58785 / CBS 6054 / NBRC 10063 / NRRL Y-11545) (Yeast).